Consider the following 288-residue polypeptide: Small ribosomal subunit biogenesis GTPase RsgA (288 aa).

The CP-type G domain occupies 61-218; it reads TNKLIRPPVS…IVDTPGFSSL (158 aa). Residues 110–113 and 161–169 contribute to the GTP site; these read NKID and GPSGVGKST. Zn(2+)-binding residues include Cys242, Cys247, His249, and Cys255.

Belongs to the TRAFAC class YlqF/YawG GTPase family. RsgA subfamily. Monomer. Associates with 30S ribosomal subunit, binds 16S rRNA. Zn(2+) is required as a cofactor.

It localises to the cytoplasm. One of several proteins that assist in the late maturation steps of the functional core of the 30S ribosomal subunit. Helps release RbfA from mature subunits. May play a role in the assembly of ribosomal proteins into the subunit. Circularly permuted GTPase that catalyzes slow GTP hydrolysis, GTPase activity is stimulated by the 30S ribosomal subunit. In Clostridium acetobutylicum (strain ATCC 824 / DSM 792 / JCM 1419 / IAM 19013 / LMG 5710 / NBRC 13948 / NRRL B-527 / VKM B-1787 / 2291 / W), this protein is Small ribosomal subunit biogenesis GTPase RsgA.